Reading from the N-terminus, the 310-residue chain is Methionyl-tRNA formyltransferase (310 aa).

110 to 113 (SLLP) is a binding site for (6S)-5,6,7,8-tetrahydrofolate.

This sequence belongs to the Fmt family.

The enzyme catalyses L-methionyl-tRNA(fMet) + (6R)-10-formyltetrahydrofolate = N-formyl-L-methionyl-tRNA(fMet) + (6S)-5,6,7,8-tetrahydrofolate + H(+). Its function is as follows. Attaches a formyl group to the free amino group of methionyl-tRNA(fMet). The formyl group appears to play a dual role in the initiator identity of N-formylmethionyl-tRNA by promoting its recognition by IF2 and preventing the misappropriation of this tRNA by the elongation apparatus. The chain is Methionyl-tRNA formyltransferase from Streptomyces avermitilis (strain ATCC 31267 / DSM 46492 / JCM 5070 / NBRC 14893 / NCIMB 12804 / NRRL 8165 / MA-4680).